We begin with the raw amino-acid sequence, 194 residues long: HTH-type transcriptional regulator BetI (194 aa).

An HTH tetR-type domain is found at 8-68 (EIRRAQLIDA…ATMRHVLRDL (61 aa)). Positions 31–50 (TLASVAQRANISTGIVSHYF) form a DNA-binding region, H-T-H motif.

It functions in the pathway amine and polyamine biosynthesis; betaine biosynthesis via choline pathway [regulation]. Functionally, repressor involved in the biosynthesis of the osmoprotectant glycine betaine. It represses transcription of the choline transporter BetT and the genes of BetAB involved in the synthesis of glycine betaine. In Burkholderia ambifaria (strain MC40-6), this protein is HTH-type transcriptional regulator BetI.